Here is a 145-residue protein sequence, read N- to C-terminus: D-aminoacyl-tRNA deacylase (145 aa).

The short motif at 137 to 138 (GP) is the Gly-cisPro motif, important for rejection of L-amino acids element.

It belongs to the DTD family. As to quaternary structure, homodimer.

The protein localises to the cytoplasm. The enzyme catalyses glycyl-tRNA(Ala) + H2O = tRNA(Ala) + glycine + H(+). It catalyses the reaction a D-aminoacyl-tRNA + H2O = a tRNA + a D-alpha-amino acid + H(+). In terms of biological role, an aminoacyl-tRNA editing enzyme that deacylates mischarged D-aminoacyl-tRNAs. Also deacylates mischarged glycyl-tRNA(Ala), protecting cells against glycine mischarging by AlaRS. Acts via tRNA-based rather than protein-based catalysis; rejects L-amino acids rather than detecting D-amino acids in the active site. By recycling D-aminoacyl-tRNA to D-amino acids and free tRNA molecules, this enzyme counteracts the toxicity associated with the formation of D-aminoacyl-tRNA entities in vivo and helps enforce protein L-homochirality. The chain is D-aminoacyl-tRNA deacylase from Shewanella oneidensis (strain ATCC 700550 / JCM 31522 / CIP 106686 / LMG 19005 / NCIMB 14063 / MR-1).